The primary structure comprises 349 residues: Peptide chain release factor 1 (349 aa).

Gln233 is modified (N5-methylglutamine).

Belongs to the prokaryotic/mitochondrial release factor family. In terms of processing, methylated by PrmC. Methylation increases the termination efficiency of RF1.

It is found in the cytoplasm. In terms of biological role, peptide chain release factor 1 directs the termination of translation in response to the peptide chain termination codons UAG and UAA. The chain is Peptide chain release factor 1 from Pelotomaculum thermopropionicum (strain DSM 13744 / JCM 10971 / SI).